The sequence spans 186 residues: Glutathione-independent glyoxalase DJR-1.2 (186 aa).

Residues Glu-20, Cys-105, and His-124 contribute to the active site.

This sequence belongs to the peptidase C56 family. DJ-1 subfamily. As to expression, expressed in various tissues, including pharyngeal muscles, pharynx-intestinal valve, ventral nerve cord, spermatheca, rectal gland, inner labial (IL) cells of head neurons, phasmid (PHA/PHB) neurons in tail and supporting sheath/socket cells, as well as in head mesodermal cells (HMC), excretory canals and coelomocytes.

Its subcellular location is the cytoplasm. The catalysed reaction is methylglyoxal + H2O = (R)-lactate + H(+). In terms of biological role, catalyzes the conversion of methylglyoxal (MG) or glyoxal (GO) to D-lactate or glycolic acid respectively in a single glutathione (GSH)-independent step. May play a role in detoxifying endogenously produced glyoxals. Involved in protection against glyoxal-induced cell death. Protects dopaminergic neurons from glyoxal-dependent neuronal degeneration. The sequence is that of Glutathione-independent glyoxalase DJR-1.2 from Caenorhabditis elegans.